A 239-amino-acid polypeptide reads, in one-letter code: Small ribosomal subunit protein uS3c (239 aa).

In terms of domain architecture, KH type-2 spans Ile43 to Lys139. The interval Asn50 to Met74 is disordered.

The protein belongs to the universal ribosomal protein uS3 family. As to quaternary structure, part of the 30S ribosomal subunit.

It is found in the plastid. It localises to the chloroplast. The sequence is that of Small ribosomal subunit protein uS3c (rps3) from Hordeum vulgare (Barley).